Reading from the N-terminus, the 327-residue chain is Small ribosomal subunit protein RACK1 (327 aa).

WD repeat units lie at residues 13–44, 61–91, 103–133, 148–180, 192–222, 233–262, and 293–323; these read AHTDMVTAIATPIDNSDTIVSASRDKSIIVWK, GHSHFVEDVVLSSDGQFALSGSWDGELRLWD, GHTKDVLSVAFSLDNRQIVSASRDRTIKLWN, GHRDWVSCVRFSPNTLQPTIVSASCDKTVKVWN, GHTGYVSTVAVSPDGSLCASGGKDGVVLLWD, EANSVIHALCFTPNRYWLCAATEQGIKIWD, and RKVIYCTSLNWSADGSTLFSGYTDGVIRVWG.

It belongs to the WD repeat G protein beta family. Ribosomal protein RACK1 subfamily.

This chain is Small ribosomal subunit protein RACK1 (GB1), found in Brassica napus (Rape).